We begin with the raw amino-acid sequence, 157 residues long: Transcription elongation factor GreA (157 aa).

Belongs to the GreA/GreB family.

Necessary for efficient RNA polymerase transcription elongation past template-encoded arresting sites. The arresting sites in DNA have the property of trapping a certain fraction of elongating RNA polymerases that pass through, resulting in locked ternary complexes. Cleavage of the nascent transcript by cleavage factors such as GreA or GreB allows the resumption of elongation from the new 3'terminus. GreA releases sequences of 2 to 3 nucleotides. This chain is Transcription elongation factor GreA, found in Maricaulis maris (strain MCS10) (Caulobacter maris).